Consider the following 286-residue polypeptide: P2R1A-PPP2R2A-interacting phosphatase regulator 1 (286 aa).

The segment at 1–46 (MAQEKMELDLELPAGTGASPAEGGGPGSGGLRRSNSAPLIHGLSDS) is disordered. At S34 the chain carries Phosphoserine. S36 carries the post-translational modification Phosphoserine; by CHEK1. A phosphoserine mark is found at S44, S47, S61, and S75. Residue K88 forms a Glycyl lysine isopeptide (Lys-Gly) (interchain with G-Cter in SUMO1) linkage. S142 and S146 each carry phosphoserine. A Phosphothreonine modification is found at T148. The tract at residues 166–187 (SNGLPPSPIPSPTTRFTTRRSQ) is disordered. The span at 177 to 187 (PTTRFTTRRSQ) shows a compositional bias: low complexity. 2 positions are modified to phosphoserine: S186 and S188. The tract at residues 238–286 (VSSDTLDGNSSSAGSSCNSPAKVSTTTDSPVSPAQAASPFIPVDELSSK) is disordered. A compositionally biased stretch (low complexity) spans 245–256 (GNSSSAGSSCNS). The span at 258–269 (AKVSTTTDSPVS) shows a compositional bias: polar residues. 3 positions are modified to phosphoserine: S266, S269, and S275.

The protein belongs to the FAM122 family. As to quaternary structure, interacts with PPP2CA and PPP2R1A. Interacts (via its N-terminus) with PPP2R2A; the interaction is direct and this interaction inhibits PP2A activity. The CHEK1-mediated Ser-36 phosphorylated form interacts with 14-3-3 proteins. Post-translationally, CHEK1-mediated phosphorylation at Ser-36 negatively regulates its ability to inhibit serine/threonine-protein phosphatase 2A (PP2A) activity. Phosphorylation leads to its release from the PP2A complex and its sequestration by 14-3-3 proteins in the cytoplasm resulting in its inability to translocate to the nucleus, where it otherwise inhibits PP2A.

It is found in the nucleus. Its subcellular location is the cytoplasm. Acts as an inhibitor of serine/threonine-protein phosphatase 2A (PP2A) activity. Inhibits PP2A activity by blocking the substrate binding site on PPP2R2A and the active site of PPP2CA. Potentiates ubiquitin-mediated proteasomal degradation of serine/threonine-protein phosphatase 2A catalytic subunit alpha (PPP2CA). Inhibits PP2A-mediated dephosphorylation of WEE1, promoting ubiquitin-mediated proteolysis of WEE1, thereby releasing G2/M checkpoint. The protein is P2R1A-PPP2R2A-interacting phosphatase regulator 1 of Rattus norvegicus (Rat).